The following is a 317-amino-acid chain: Ribosomal protein L11 methyltransferase (317 aa).

Residues T158, G179, D201, and N244 each coordinate S-adenosyl-L-methionine.

The protein belongs to the methyltransferase superfamily. PrmA family.

The protein localises to the cytoplasm. The enzyme catalyses L-lysyl-[protein] + 3 S-adenosyl-L-methionine = N(6),N(6),N(6)-trimethyl-L-lysyl-[protein] + 3 S-adenosyl-L-homocysteine + 3 H(+). Functionally, methylates ribosomal protein L11. The sequence is that of Ribosomal protein L11 methyltransferase from Streptococcus pyogenes serotype M12 (strain MGAS2096).